Consider the following 222-residue polypeptide: Triosephosphate isomerase (222 aa).

Residue 9 to 11 (NYK) coordinates substrate. The active-site Electrophile is the histidine 93. Catalysis depends on glutamate 141, which acts as the Proton acceptor. Residues isoleucine 146, glycine 181, and 202 to 203 (AS) each bind substrate.

The protein belongs to the triosephosphate isomerase family. Homotetramer; dimer of dimers.

The protein resides in the cytoplasm. It carries out the reaction D-glyceraldehyde 3-phosphate = dihydroxyacetone phosphate. The protein operates within carbohydrate biosynthesis; gluconeogenesis. It functions in the pathway carbohydrate degradation; glycolysis; D-glyceraldehyde 3-phosphate from glycerone phosphate: step 1/1. In terms of biological role, involved in the gluconeogenesis. Catalyzes stereospecifically the conversion of dihydroxyacetone phosphate (DHAP) to D-glyceraldehyde-3-phosphate (G3P). This Methanosarcina mazei (strain ATCC BAA-159 / DSM 3647 / Goe1 / Go1 / JCM 11833 / OCM 88) (Methanosarcina frisia) protein is Triosephosphate isomerase.